A 269-amino-acid polypeptide reads, in one-letter code: Monofunctional glycosyltransferase (269 aa).

A helical transmembrane segment spans residues 46–66; that stretch reads AIITILILLIIFFGVMYFISS.

The protein belongs to the glycosyltransferase 51 family.

It is found in the cell membrane. The enzyme catalyses [GlcNAc-(1-&gt;4)-Mur2Ac(oyl-L-Ala-gamma-D-Glu-L-Lys-D-Ala-D-Ala)](n)-di-trans,octa-cis-undecaprenyl diphosphate + beta-D-GlcNAc-(1-&gt;4)-Mur2Ac(oyl-L-Ala-gamma-D-Glu-L-Lys-D-Ala-D-Ala)-di-trans,octa-cis-undecaprenyl diphosphate = [GlcNAc-(1-&gt;4)-Mur2Ac(oyl-L-Ala-gamma-D-Glu-L-Lys-D-Ala-D-Ala)](n+1)-di-trans,octa-cis-undecaprenyl diphosphate + di-trans,octa-cis-undecaprenyl diphosphate + H(+). It participates in cell wall biogenesis; peptidoglycan biosynthesis. In terms of biological role, peptidoglycan polymerase that catalyzes glycan chain elongation using lipid-linked disaccharide-pentapeptide as the substrate. This chain is Monofunctional glycosyltransferase, found in Staphylococcus epidermidis (strain ATCC 35984 / DSM 28319 / BCRC 17069 / CCUG 31568 / BM 3577 / RP62A).